The following is a 353-amino-acid chain: Feruloyl esterase B (353 aa).

The N-terminal stretch at 1 to 18 (MAIPLVLVLAWLLPVVLA) is a signal peptide. Positions 19 to 291 (ASLTQVNNFG…VSVVLDWFGI (273 aa)) are catalytic. Serine 136 functions as the Charge relay system in the catalytic mechanism. Asparagine 179 and asparagine 246 each carry an N-linked (GlcNAc...) asparagine glycan. The CBM1 domain maps to 317–353 (CTAAHWAQCGGIGYSGCTACASPYTCQKANDYYSQCL).

It belongs to the carbohydrate esterase 1 (CE1) family. Feruloyl esterase type B subfamily. Glycosylated.

Its subcellular location is the secreted. It catalyses the reaction feruloyl-polysaccharide + H2O = ferulate + polysaccharide.. With respect to regulation, inhibited by the specific serine esterase inhibitor AEBSF. Its function is as follows. Involved in degradation of plant cell walls. Hydrolyzes the feruloyl-arabinose ester bond in arabinoxylans, and the feruloyl-galactose and feruloyl-arabinose ester bonds in pectin. Binds strongly to cellulose. The chain is Feruloyl esterase B (FAEB) from Talaromyces funiculosus (Fruitlet core rot fungus).